Here is a 376-residue protein sequence, read N- to C-terminus: UDP-N-acetylglucosamine 2-epimerase (376 aa).

Residues Arg10, Lys15, Asp95, Glu117, His213, Gln271, Phe276, 290-292 (SGG), Glu296, and Arg313 contribute to the substrate site.

It belongs to the UDP-N-acetylglucosamine 2-epimerase family. In terms of assembly, homodimer.

The protein resides in the cytoplasm. It catalyses the reaction UDP-N-acetyl-alpha-D-glucosamine = UDP-N-acetyl-alpha-D-mannosamine. It functions in the pathway bacterial outer membrane biogenesis; enterobacterial common antigen biosynthesis. Functionally, catalyzes the reversible epimerization at C-2 of UDP-N-acetylglucosamine (UDP-GlcNAc) and thereby provides bacteria with UDP-N-acetylmannosamine (UDP-ManNAc), the activated donor of ManNAc residues. This Escherichia coli O157:H7 protein is UDP-N-acetylglucosamine 2-epimerase.